Reading from the N-terminus, the 250-residue chain is Recombination protein RecR (250 aa).

The segment at 56–71 adopts a C4-type zinc-finger fold; that stretch reads CRICHNISQEDVCRIC. Residues 79 to 227 form the Toprim domain; sequence SIICVVEESK…TVTRLASGIP (149 aa). The interval 148 to 172 is disordered; sequence LGDADTPADGESSGADAAETGNAKT.

This sequence belongs to the RecR family.

May play a role in DNA repair. It seems to be involved in an RecBC-independent recombinational process of DNA repair. It may act with RecF and RecO. In Corynebacterium jeikeium (strain K411), this protein is Recombination protein RecR.